The following is a 338-amino-acid chain: Nicotinate-nucleotide--dimethylbenzimidazole phosphoribosyltransferase (338 aa).

Residue Glu305 is the Proton acceptor of the active site.

This sequence belongs to the CobT family.

The enzyme catalyses 5,6-dimethylbenzimidazole + nicotinate beta-D-ribonucleotide = alpha-ribazole 5'-phosphate + nicotinate + H(+). It participates in nucleoside biosynthesis; alpha-ribazole biosynthesis; alpha-ribazole from 5,6-dimethylbenzimidazole: step 1/2. In terms of biological role, catalyzes the synthesis of alpha-ribazole-5'-phosphate from nicotinate mononucleotide (NAMN) and 5,6-dimethylbenzimidazole (DMB). The protein is Nicotinate-nucleotide--dimethylbenzimidazole phosphoribosyltransferase of Sinorhizobium fredii (strain NBRC 101917 / NGR234).